Here is a 703-residue protein sequence, read N- to C-terminus: uncharacterized protein (703 aa).

Positions 1–23 are cleaved as a signal peptide; that stretch reads MKQIMIFLTSFMLLAMTGQTALA. Residues 673 to 693 form a helical membrane-spanning segment; that stretch reads MYIGVLALIMVVAAVFIWIAV.

Its subcellular location is the cell membrane. This is an uncharacterized protein from Bacillus subtilis (strain 168).